The primary structure comprises 359 residues: 3-dehydroquinate synthase (359 aa).

The protein belongs to the archaeal-type DHQ synthase family.

It carries out the reaction 2-amino-2,3,7-trideoxy-D-lyxo-hept-6-ulosonate + NAD(+) + H2O = 3-dehydroquinate + NH4(+) + NADH + H(+). Its function is as follows. Catalyzes the oxidative deamination and cyclization of 2-amino-3,7-dideoxy-D-threo-hept-6-ulosonic acid (ADH) to yield 3-dehydroquinate (DHQ), which is fed into the canonical shikimic pathway of aromatic amino acid biosynthesis. The chain is 3-dehydroquinate synthase from Methanosphaera stadtmanae (strain ATCC 43021 / DSM 3091 / JCM 11832 / MCB-3).